A 723-amino-acid chain; its full sequence is MSENKCPMHHSAGGTTNRDWWPKQLRLDILHQHSSLSNPMGDDFNYAEAFKSLDLAAVKQDLLALMTDSQDWWPADFGHYGPLFIRMAWHSAGTYRTGDGRGGAGSGNQRFAPLNSWPDNVSLDKARRLIWPIKQKYGNKISWADLIILTGNVALESMGFKTLGFAGGRVDIWEPEADIYWGAEDKWLDDKRYSGERDLEDPLAAVQMGLIYVNPEGPNGDPDPFAAAVDIRETFARMAMNDEETVALIAGGHTFGKTHGAGDAALVGPEPEAASIEQQGLGWKSSYKSGKGGDAISSGLEVTWTSTPTQWSNNFFENLFGYEWELTKSPAGAHQWIPKNGAGKGVIPDAHDASKRHVPAMLTTDLALIFDPDYEKISRRFFEHPDEFADVFAKAWYKLTHRDMGPCTRYLGPEVPAEAFLWQDPIPAVDHPLVDEQDVTDLKLKIIGSGLTISEVVATAWASASTYRGSDMRGGANGARIRLAPQKDWPVNQPEQLAKVLKVLESIQSEFNKSGKKISLADLIVLAGCVGIDQAARNAGVEVTIPFTPGRMDATQAQTDVESFAVLEPVADGFRNYHPTQFSVSAEELLVDRAQLLTLTAPEMTVLIGGLRVLDTNADQSKTGVLTARPEFLTNDFFVNLLDMGTTWKPTSKAEDRFEGVDRVSGQPKWTASRVDLIFGSNSQLRALAEVYASSDAQLRFIDDFIAAWTKVMNLDRFDLRRA.

A cross-link (tryptophyl-tyrosyl-methioninium (Trp-Tyr) (with M-238)) is located at residues 89–212; that stretch reads WHSAGTYRTG…LAAVQMGLIY (124 aa). H90 serves as the catalytic Proton acceptor. Positions 212–238 form a cross-link, tryptophyl-tyrosyl-methioninium (Tyr-Met) (with W-89); the sequence is YVNPEGPNGDPDPFAAAVDIRETFARM. H253 lines the heme b pocket.

This sequence belongs to the peroxidase family. Peroxidase/catalase subfamily. In terms of assembly, homodimer or homotetramer. Requires heme b as cofactor. Formation of the three residue Trp-Tyr-Met cross-link is important for the catalase, but not the peroxidase activity of the enzyme.

The enzyme catalyses H2O2 + AH2 = A + 2 H2O. It carries out the reaction 2 H2O2 = O2 + 2 H2O. In terms of biological role, bifunctional enzyme with both catalase and broad-spectrum peroxidase activity. In Shewanella baltica (strain OS185), this protein is Catalase-peroxidase.